Reading from the N-terminus, the 174-residue chain is Transcription antitermination protein NusB (174 aa).

This sequence belongs to the NusB family.

Involved in transcription antitermination. Required for transcription of ribosomal RNA (rRNA) genes. Binds specifically to the boxA antiterminator sequence of the ribosomal RNA (rrn) operons. The protein is Transcription antitermination protein NusB of Rhodopseudomonas palustris (strain TIE-1).